Consider the following 379-residue polypeptide: Cobalt-precorrin-5B C(1)-methyltransferase (379 aa).

The protein belongs to the CbiD family.

The enzyme catalyses Co-precorrin-5B + S-adenosyl-L-methionine = Co-precorrin-6A + S-adenosyl-L-homocysteine. Its pathway is cofactor biosynthesis; adenosylcobalamin biosynthesis; cob(II)yrinate a,c-diamide from sirohydrochlorin (anaerobic route): step 6/10. Functionally, catalyzes the methylation of C-1 in cobalt-precorrin-5B to form cobalt-precorrin-6A. In Salmonella choleraesuis (strain SC-B67), this protein is Cobalt-precorrin-5B C(1)-methyltransferase.